We begin with the raw amino-acid sequence, 99 residues long: Integration host factor subunit alpha (99 aa).

The tract at residues 49-71 (FGNFDLRDKNQRPGRNPKTGEDI) is disordered.

It belongs to the bacterial histone-like protein family. In terms of assembly, heterodimer of an alpha and a beta chain.

This protein is one of the two subunits of integration host factor, a specific DNA-binding protein that functions in genetic recombination as well as in transcriptional and translational control. The polypeptide is Integration host factor subunit alpha (Shewanella frigidimarina (strain NCIMB 400)).